Here is a 508-residue protein sequence, read N- to C-terminus: Photosystem II CP47 reaction center protein (508 aa).

6 consecutive transmembrane segments (helical) span residues 21–36 (AVHI…WAGS), 101–115 (IVFS…IWHW), 140–156 (GIHL…FGAF), 203–218 (IAAG…FHLS), 237–252 (VLSS…AFVV), and 457–472 (SFAL…HGSR).

This sequence belongs to the PsbB/PsbC family. PsbB subfamily. In terms of assembly, PSII is composed of 1 copy each of membrane proteins PsbA, PsbB, PsbC, PsbD, PsbE, PsbF, PsbH, PsbI, PsbJ, PsbK, PsbL, PsbM, PsbT, PsbX, PsbY, PsbZ, Psb30/Ycf12, at least 3 peripheral proteins of the oxygen-evolving complex and a large number of cofactors. It forms dimeric complexes. It depends on Binds multiple chlorophylls. PSII binds additional chlorophylls, carotenoids and specific lipids. as a cofactor.

It localises to the plastid. The protein resides in the chloroplast thylakoid membrane. In terms of biological role, one of the components of the core complex of photosystem II (PSII). It binds chlorophyll and helps catalyze the primary light-induced photochemical processes of PSII. PSII is a light-driven water:plastoquinone oxidoreductase, using light energy to abstract electrons from H(2)O, generating O(2) and a proton gradient subsequently used for ATP formation. The polypeptide is Photosystem II CP47 reaction center protein (Lotus japonicus (Lotus corniculatus var. japonicus)).